Consider the following 600-residue polypeptide: Transcription factor rlmA (600 aa).

Residues 1 to 61 (MGRRKIEIKA…KKLYEFSSCD (61 aa)) form the MADS-box domain. 2 disordered regions span residues 71 to 518 (YYGP…NIET) and 544 to 600 (GFGR…KSKT). Residues 75–89 (PHEHKGPEDFNGKRD) are compositionally biased toward basic and acidic residues. A compositionally biased stretch (polar residues) spans 151–160 (PQPQGASRPS). Over residues 222–242 (QPLPPHAIPPHPMPQPVPPHH) the composition is skewed to pro residues. A compositionally biased stretch (low complexity) spans 243–260 (QAPQHLPQHPHPLAQQTP). Over residues 328 to 339 (HQRSLSSKSRSI) the composition is skewed to polar residues. Over residues 364-384 (PRTESADVKAEAKQNDSKEIK) the composition is skewed to basic and acidic residues. Positions 386–397 (PAQPVAPPPPPR) are enriched in pro residues. Over residues 440–452 (RGSATADSSSSTG) the composition is skewed to low complexity. Over residues 453–468 (NQTVTPAKANPDTNHS) the composition is skewed to polar residues. A compositionally biased stretch (pro residues) spans 490 to 501 (PPNPFARPPPPG). Low complexity predominate over residues 503-515 (ASQNSNAYNSNNN).

The protein belongs to the MEF2 family. Interacts with hsp90. Phosphorylation during asexual development.

Its subcellular location is the nucleus. Functionally, transcription factor; part of cell wall integrity (CWI) signaling pathway composed of pkcA, the bck1-mkk2-mpka MAPK cascade and the downstream rlmA transcription regulator. The CWI signaling pathway regulates cell wall integrity and pyomelanin formation. CWI also controls oxidative stress response, gliotoxin production, iron adaptation and asexual development. Finally, CWI is constitutively required for A.fumigatus to cope with the temperature increase found in the mammalian lung environment, during infection. Positively regulates the phosphorylation of mpkA. Involved in tolerance to oxidative damage and transcriptional regulation of genes related to oxidative stress adaptation. Directly regulates the expression of regulators of conidiation, including flbB, flbC, brlA, abaA, and rasB, as well as genes involved in cell wall synthesis and remodeling. Specifically associates with the target fumiquinazoline (fmq) cluster genes promoters at conserved motifs (5'-TAWWWWTA-3') during conidiation to supplement mature conidia with fumiquinazoline C. Also controls the DHN-melanin production via binding the promoter of pksP. This is Transcription factor rlmA from Aspergillus fumigatus (strain ATCC MYA-4609 / CBS 101355 / FGSC A1100 / Af293) (Neosartorya fumigata).